Here is a 598-residue protein sequence, read N- to C-terminus: Fumarate reductase flavoprotein subunit (598 aa).

Residues 12 to 16 (GAGGA), 36 to 38 (ISK), 44 to 52 (SHTVAAEGG), 156 to 158 (HFV), and Asp212 contribute to the FAD site. The residue at position 45 (His45) is a Tele-8alpha-FAD histidine. Active-site residues include His233 and Arg249. FAD-binding positions include 356–357 (HY), Glu380, and 391–397 (RLGSNSL). The segment at 577–598 (AKRVYGGEATAQDKQNKEKANG) is disordered.

The protein belongs to the FAD-dependent oxidoreductase 2 family. FRD/SDH subfamily. Part of an enzyme complex containing four subunits: a flavoprotein (FrdA), an iron-sulfur protein (FrdB), and two hydrophobic anchor proteins (FrdC and FrdD). FAD serves as cofactor.

The protein localises to the cell inner membrane. It catalyses the reaction a quinone + succinate = fumarate + a quinol. The catalysed reaction is a menaquinone + succinate = a menaquinol + fumarate. Two distinct, membrane-bound, FAD-containing enzymes are responsible for the catalysis of fumarate and succinate interconversion; the fumarate reductase is used in anaerobic growth, and the succinate dehydrogenase is used in aerobic growth. This is Fumarate reductase flavoprotein subunit (frdA) from Proteus vulgaris.